The sequence spans 284 residues: MKLLILTCLVAAALALPRAHRRNAVSSQTQQENSSSEEQEIVKQPKYLSLNEEFVNNLNRQRELLTEQDNEIKITMDSSAEEQATASAQEDSSSSSSSSEESKDAIPSATEQKNIANKEILNRCTLEQLQRQIKYSQLLQQASLAQQASLAQQASLAQQALLAQQPSLAQQAALAQQASLAQQASLAQQASLAQKHHPRLSQVYYPNMEQPYRMNAYSQVQMRHPMSVVDQAQFSVQSFPQLSQYGAYPLWLYFPQDMQYLTPEAVLNTFKPIAPKDAENTNVW.

Positions 1-15 (MKLLILTCLVAAALA) are cleaved as a signal peptide. Disordered stretches follow at residues 21 to 44 (RRNAVSSQTQQENSSSEEQEIVKQ) and 78 to 111 (SSAEEQATASAQEDSSSSSSSSEESKDAIPSATE). Low complexity-rich tracts occupy residues 24–36 (AVSSQTQQENSSS) and 78–99 (SSAEEQATASAQEDSSSSSSSS). Phosphoserine is present on residues Ser-79, Ser-93, Ser-94, Ser-95, Ser-96, Ser-97, Ser-98, and Ser-99. 10 repeat units span residues 138–143 (LLQQAS), 144–149 (LAQQAS), 150–155 (LAQQAS), 156–161 (LAQQAL), 162–167 (LAQQPS), 168–173 (LAQQAA), 174–179 (LAQQAS), 180–185 (LAQQAS), 186–191 (LAQQAS), and 192–197 (LAQKHH). A 10 X 6 AA tandem repeats region spans residues 138-197 (LLQQASLAQQASLAQQASLAQQALLAQQPSLAQQAALAQQASLAQQASLAQQASLAQKHH).

Belongs to the alpha-casein family. Mammary gland specific. Secreted in milk.

The protein localises to the secreted. In terms of biological role, important role in the capacity of milk to transport calcium phosphate. The chain is Alpha-S1-casein (Csn1s1) from Rattus norvegicus (Rat).